We begin with the raw amino-acid sequence, 173 residues long: Mitochondrial import inner membrane translocase subunit TIM22-1 (173 aa).

A mitochondrion-targeting transit peptide spans 1–18; the sequence is MADSSAAEPTTGASSPPV. The interval 1-26 is disordered; sequence MADSSAAEPTTGASSPPVASDENSTQ. 4 helical membrane-spanning segments follow: residues 52-72, 101-119, 128-144, and 151-168; these read VTSG…LGAL, SCKT…ECIV, TVNT…SMSA, and ACIG…IEKF.

Belongs to the Tim17/Tim22/Tim23 family. In terms of tissue distribution, expressed in young cotyledons, roots, flowers and leaves.

The protein resides in the mitochondrion inner membrane. Functionally, essential core component of the TIM22 complex, a complex that mediates the import and insertion of multi-pass transmembrane proteins into the mitochondrial inner membrane. This is Mitochondrial import inner membrane translocase subunit TIM22-1 (TIM22-1) from Arabidopsis thaliana (Mouse-ear cress).